A 248-amino-acid chain; its full sequence is MAGHSQFKNIMHRKGRQDAVRSKMFSKLAREITVAAKAGLPDPTMNARLRLAIQNAKAQSMPKDNIDRAIKKAAGADGENYDEVRYEGYGPGGTAIIVEALTDNRNRTASNVRSIFTKAGGALGETGSVSFSFDHVGEITYKLSVGDADKVMEAAIEAGADDVETDEEGHYITCAFEALGDVSKALESGLGEAETVKAVWRAQNNVPVDEEKAQSLMKLIDSLEDDDDVQNVYSNFEVSEEVLAKLSA.

This sequence belongs to the TACO1 family.

The protein resides in the cytoplasm. In Rhizobium etli (strain CIAT 652), this protein is Probable transcriptional regulatory protein RHECIAT_CH0003714.